We begin with the raw amino-acid sequence, 229 residues long: MAKKKAFTPLFYLASIVFLPWWISFSVNKCLESWVTNWWNTGQSQIVLNNIQEKSLLEKFRELEELLFLDEMIKEYSETHLEEFGIGIHKETIQLITIQNENRMDTILHFSTNIIWFGILSGYSILGKEKLVILNSWAQEFLYNLSDTAKALCLLLVTEFFLGYHSPPGWEFAIRSIYNEVGVVANEQTITILVCILPVIFDTCFKYWLFRYLTSLSPSILLIYDSITE.

The next 2 membrane-spanning stretches (helical) occupy residues 7 to 27 (FTPL…SFSV) and 107 to 127 (ILHF…SILG).

This sequence belongs to the CemA family.

The protein localises to the plastid. Its subcellular location is the chloroplast inner membrane. It catalyses the reaction K(+)(in) + H(+)(out) = K(+)(out) + H(+)(in). Its function is as follows. Contributes to K(+)/H(+) antiport activity by supporting proton efflux to control proton extrusion and homeostasis in chloroplasts in a light-dependent manner to modulate photosynthesis. Prevents excessive induction of non-photochemical quenching (NPQ) under continuous-light conditions. Indirectly promotes efficient inorganic carbon uptake into chloroplasts. The protein is Potassium/proton antiporter CemA of Solanum tuberosum (Potato).